Reading from the N-terminus, the 432-residue chain is 5'-deoxyadenosine deaminase (432 aa).

Zn(2+) contacts are provided by H63 and H65. Residues E92 and H184 each coordinate substrate. H211 is a binding site for Zn(2+). Residues E214 and D299 each contribute to the substrate site. D299 lines the Zn(2+) pocket.

The protein belongs to the metallo-dependent hydrolases superfamily. MTA/SAH deaminase family. Homotetramer. Requires Zn(2+) as cofactor.

It carries out the reaction 5'-deoxyadenosine + H2O + H(+) = 5'-deoxyinosine + NH4(+). The enzyme catalyses S-adenosyl-L-homocysteine + H2O + H(+) = S-inosyl-L-homocysteine + NH4(+). It catalyses the reaction S-methyl-5'-thioadenosine + H2O + H(+) = S-methyl-5'-thioinosine + NH4(+). The catalysed reaction is adenosine + H2O + H(+) = inosine + NH4(+). Its pathway is amino-acid biosynthesis; S-adenosyl-L-methionine biosynthesis. Catalyzes the deamination of three SAM-derived enzymatic products, namely 5'-deoxyadenosine, S-adenosyl-L-homocysteine, and 5'-methylthioadenosine, to produce the inosine analogs. Can also deaminate adenosine. The preferred substrate for this enzyme is 5'-deoxyadenosine, but all these substrates are efficiently deaminated. Likely functions in a S-adenosyl-L-methionine (SAM) recycling pathway from S-adenosyl-L-homocysteine (SAH) produced from SAM-dependent methylation reactions. May also be involved in the recycling of 5'-deoxyadenosine, whereupon the 5'-deoxyribose moiety of 5'-deoxyinosine is further metabolized to deoxyhexoses used for the biosynthesis of aromatic amino acids in methanogens. In Methanosarcina barkeri (strain Fusaro / DSM 804), this protein is 5'-deoxyadenosine deaminase.